The sequence spans 421 residues: UDP-N-acetylglucosamine 1-carboxyvinyltransferase (421 aa).

22-23 is a phosphoenolpyruvate binding site; that stretch reads KN. Residue Arg-93 coordinates UDP-N-acetyl-alpha-D-glucosamine. The active-site Proton donor is the Cys-117. 2-(S-cysteinyl)pyruvic acid O-phosphothioketal is present on Cys-117. UDP-N-acetyl-alpha-D-glucosamine contacts are provided by residues 122–126, Asp-308, and Ile-330; that span reads RPVDL.

This sequence belongs to the EPSP synthase family. MurA subfamily.

It is found in the cytoplasm. It catalyses the reaction phosphoenolpyruvate + UDP-N-acetyl-alpha-D-glucosamine = UDP-N-acetyl-3-O-(1-carboxyvinyl)-alpha-D-glucosamine + phosphate. It functions in the pathway cell wall biogenesis; peptidoglycan biosynthesis. Cell wall formation. Adds enolpyruvyl to UDP-N-acetylglucosamine. This chain is UDP-N-acetylglucosamine 1-carboxyvinyltransferase, found in Pseudomonas syringae pv. tomato (strain ATCC BAA-871 / DC3000).